The sequence spans 665 residues: FAD-dependent oxidoreductase domain-containing protein 2 (665 aa).

A signal peptide spans 1–17 (MGPSGLLVALALHLAVC). Asparagine 136 is a glycosylation site (N-linked (GlcNAc...) asparagine). The interval 642 to 665 (RWLGDHSTAPEPLTQSLDSNKEEL) is disordered. The short motif at 662 to 665 (KEEL) is the Prevents secretion from ER element.

This sequence belongs to the FOXRED2 family. Interacts with SEL1L. May interact with OS9 and DNAJC10. Interacts with TXNDC16. The cofactor is FAD. In terms of processing, N-glycosylated.

Its subcellular location is the endoplasmic reticulum lumen. Functionally, probable flavoprotein which may function in endoplasmic reticulum associated degradation (ERAD). May bind non-native proteins in the endoplasmic reticulum and target them to the ubiquitination machinery for subsequent degradation. The chain is FAD-dependent oxidoreductase domain-containing protein 2 from Mus musculus (Mouse).